A 505-amino-acid polypeptide reads, in one-letter code: Folate transporter 1 (505 aa).

4 consecutive transmembrane segments (helical) span residues serine 58–leucine 78, leucine 89–isoleucine 109, tyrosine 122–threonine 142, and leucine 146–isoleucine 166. N-linked (GlcNAc...) asparagine glycans are attached at residues asparagine 177, asparagine 181, and asparagine 186. The next 2 membrane-spanning stretches (helical) occupy residues alanine 192 to isoleucine 212 and histidine 216 to isoleucine 236. A glycan (N-linked (GlcNAc...) asparagine) is linked at asparagine 240. The next 5 helical transmembrane spans lie at isoleucine 266–isoleucine 286, methionine 300–threonine 320, lysine 326–isoleucine 346, phenylalanine 352–alanine 372, and phenylalanine 405–serine 425. Residue asparagine 427 is glycosylated (N-linked (GlcNAc...) asparagine). The chain crosses the membrane as a helical span at residues leucine 431–isoleucine 451. The N-linked (GlcNAc...) asparagine glycan is linked to asparagine 454.

Belongs to the major facilitator superfamily. Folate-biopterin transporter (TC 2.A.71) family.

The protein localises to the cell membrane. It carries out the reaction folate(in) + H(+)(in) = folate(out) + H(+)(out). With respect to regulation, transport of folates is inhibited by probenecid and methotrexate. Functionally, folate transporter with broad substrate specificity. Transports folic acid, folinic acid, pteroic acid, dihydropteroic acid, the folate precursor p-amino benzoic acid (pABA) and the human folate catabolite pABA monoglutamate. The sequence is that of Folate transporter 1 from Plasmodium falciparum (isolate 3D7).